Here is a 232-residue protein sequence, read N- to C-terminus: Ion-translocating oxidoreductase complex subunit E (232 aa).

A run of 5 helical transmembrane segments spans residues 39–59, 69–89, 93–113, 128–148, and 182–202; these read LGLG…ISLV, IPVF…LVNA, GLYM…IIIG, AFDG…LGAT, and SFLL…LIAL.

Belongs to the NqrDE/RnfAE family. In terms of assembly, the complex is composed of six subunits: RnfA, RnfB, RnfC, RnfD, RnfE and RnfG.

It is found in the cell inner membrane. Its function is as follows. Part of a membrane-bound complex that couples electron transfer with translocation of ions across the membrane. The chain is Ion-translocating oxidoreductase complex subunit E from Shewanella oneidensis (strain ATCC 700550 / JCM 31522 / CIP 106686 / LMG 19005 / NCIMB 14063 / MR-1).